Here is a 478-residue protein sequence, read N- to C-terminus: Glutamyl-tRNA(Gln) amidotransferase subunit A (478 aa).

Catalysis depends on charge relay system residues Lys72 and Ser147. The active-site Acyl-ester intermediate is the Ser171.

It belongs to the amidase family. GatA subfamily. In terms of assembly, heterotrimer of A, B and C subunits.

It carries out the reaction L-glutamyl-tRNA(Gln) + L-glutamine + ATP + H2O = L-glutaminyl-tRNA(Gln) + L-glutamate + ADP + phosphate + H(+). Its function is as follows. Allows the formation of correctly charged Gln-tRNA(Gln) through the transamidation of misacylated Glu-tRNA(Gln) in organisms which lack glutaminyl-tRNA synthetase. The reaction takes place in the presence of glutamine and ATP through an activated gamma-phospho-Glu-tRNA(Gln). The sequence is that of Glutamyl-tRNA(Gln) amidotransferase subunit A from Saccharolobus solfataricus (strain ATCC 35092 / DSM 1617 / JCM 11322 / P2) (Sulfolobus solfataricus).